Reading from the N-terminus, the 262-residue chain is Acyl-[acyl-carrier-protein]--UDP-N-acetylglucosamine O-acyltransferase (262 aa).

It belongs to the transferase hexapeptide repeat family. LpxA subfamily. As to quaternary structure, homotrimer.

The protein resides in the cytoplasm. It catalyses the reaction a (3R)-hydroxyacyl-[ACP] + UDP-N-acetyl-alpha-D-glucosamine = a UDP-3-O-[(3R)-3-hydroxyacyl]-N-acetyl-alpha-D-glucosamine + holo-[ACP]. Its pathway is glycolipid biosynthesis; lipid IV(A) biosynthesis; lipid IV(A) from (3R)-3-hydroxytetradecanoyl-[acyl-carrier-protein] and UDP-N-acetyl-alpha-D-glucosamine: step 1/6. Functionally, involved in the biosynthesis of lipid A, a phosphorylated glycolipid that anchors the lipopolysaccharide to the outer membrane of the cell. The protein is Acyl-[acyl-carrier-protein]--UDP-N-acetylglucosamine O-acyltransferase of Aliivibrio fischeri (strain ATCC 700601 / ES114) (Vibrio fischeri).